A 1372-amino-acid polypeptide reads, in one-letter code: Collagen alpha-2(I) chain (1372 aa).

The N-terminal stretch at 1–22 (MLSFVDTRTLLLLAVTSCLATC) is a signal peptide. A Pyrrolidone carboxylic acid modification is found at Gln23. Positions 23–85 (QSLQMGSVRK…PPGLTGNFAA (63 aa)) are cleaved as a propeptide — N-terminal propeptide. Positions 28–1135 (GSVRKGPTGD…DQPRSQPSLR (1108 aa)) are disordered. Residues 59-77 (VGPPGPPGAPGPPGPPGPP) are compositionally biased toward pro residues. Pyrrolidone carboxylic acid is present on Gln86. Lys90 is subject to Allysine. Over residues 95–146 (GPGPMGLMGPRGPPGAVGAPGPQGFQGPAGEPGEPGQTGPAGSRGPAGPPGK) the composition is skewed to low complexity. The segment covering 147–161 (AGEDGHPGKPGRPGE) has biased composition (basic and acidic residues). The residue at position 183 (Lys183) is a 5-hydroxylysine; alternate. Lys183 is a glycosylation site (O-linked (Gal...) hydroxylysine; alternate). Low complexity-rich tracts occupy residues 231–260 (VGAP…SAGP), 285–299 (AGPR…LSGP), 306–327 (PGAN…AGAP), 336–348 (PGPV…TGPR), 390–416 (PGEP…LPGA), 476–495 (LPGI…RGEA), and 519–537 (PGLA…NGAQ). The span at 544–553 (GVQGGKGEQG) shows a compositional bias: gly residues. Residues 600–639 (PGESGAAGPSGPIGIRGPSGAPGPDGNKGEAGAVGAPGSA) show a composition bias toward low complexity. A compositionally biased stretch (gly residues) spans 640 to 649 (GASGPGGLPG). Composition is skewed to low complexity over residues 674-716 (NPGR…PRGS) and 725-743 (PAGP…QPGA). A compositionally biased stretch (basic and acidic residues) spans 744–753 (KGEKGTKGPK). Positions 755 to 771 (ENGIVGPTGPVGAAGPS) are enriched in low complexity. Residues 781–790 (GSRGDGGPPG) are compositionally biased toward gly residues. A Cell attachment site motif is present at residues 783 to 785 (RGD). The segment covering 792–801 (TGFPGAAGRT) has biased composition (low complexity). Residues 828-830 (RGD) carry the Cell attachment site motif. 4 stretches are compositionally biased toward low complexity: residues 855 to 882 (SGEP…LGLP), 891 to 927 (PGIA…NGAP), 957 to 978 (PGNI…VGPA), and 987 to 1007 (PGPA…PSGP). A Cell attachment site motif is present at residues 1011–1013 (RGD). Basic and acidic residues predominate over residues 1011–1022 (RGDKGEPGDKGA). The span at 1095–1107 (AGPPGPPGPPGPP) shows a compositional bias: pro residues. Over residues 1108 to 1120 (GVSGGGYDFGFEG) the composition is skewed to gly residues. Positions 1126–1372 (DQPRSQPSLR…RVEVGPVCFK (247 aa)) are cleaved as a propeptide — C-terminal propeptide. The region spanning 1139–1372 (YEVDATLKSL…RVEVGPVCFK (234 aa)) is the Fibrillar collagen NC1 domain. Intrachain disulfides connect Cys1169/Cys1201, Cys1209/Cys1370, and Cys1278/Cys1323. Residues Asp1187, Asn1189, Gln1190, Cys1192, and Asp1195 each coordinate Ca(2+). N-linked (GlcNAc...) asparagine glycosylation occurs at Asn1273.

The protein belongs to the fibrillar collagen family. As to quaternary structure, trimers of one alpha 2(I) and two alpha 1(I) chains. Interacts (via C-terminus) with TMEM131 (via PapD-L domain); the interaction is direct and is involved in assembly and TRAPPIII ER-to-Golgi transport complex-dependent secretion of collagen. In terms of processing, proline residues at the third position of the tripeptide repeating unit (G-X-P) are hydroxylated in some or all of the chains. Proline residues at the second position of the tripeptide repeating unit (G-P-X) are hydroxylated in some of the chains. As to expression, forms the fibrils of tendon, ligaments and bones. In bones the fibrils are mineralized with calcium hydroxyapatite. Expressed in flagella of epididymal sperm.

It localises to the secreted. It is found in the extracellular space. The protein resides in the extracellular matrix. Its function is as follows. Type I collagen is a member of group I collagen (fibrillar forming collagen). This is Collagen alpha-2(I) chain (Col1a2) from Rattus norvegicus (Rat).